The primary structure comprises 250 residues: Cruxrhodopsin-1 (250 aa).

Topologically, residues 1-9 (MPEPGSEAI) are extracellular. The chain crosses the membrane as a helical span at residues 10 to 27 (WLWLGTAGMFLGMLYFIA). The Cytoplasmic portion of the chain corresponds to 28-41 (RGWGETDSRRQKFY). Residues 42-60 (IATILITAIAFVNYLAMAL) form a helical membrane-spanning segment. The Extracellular segment spans residues 61–77 (GFGLTIVEFAGEEHPIY). A helical transmembrane segment spans residues 78 to 94 (WARYSDWLFTTPLLLYD). The Cytoplasmic segment spans residues 95-105 (LGLLAGADRNT). The chain crosses the membrane as a helical span at residues 106 to 125 (ITSLVSLDVLMIGTGLVATL). At 126 to 138 (SPGSGVLSAGAER) the chain is on the extracellular side. The helical transmembrane segment at 139 to 158 (LVWWGISTAFLLVLLYFLFS) threads the bilayer. The Cytoplasmic portion of the chain corresponds to 159 to 176 (SLSGRVADLPSDTRSTFK). Residues 177–195 (TLRNLVTVVWLVYPVWWLI) traverse the membrane as a helical segment. The Extracellular portion of the chain corresponds to 196–207 (GTEGIGLVGIGI). A helical membrane pass occupies residues 208-227 (ETAGFMVIDLTAKVGFGIIL). Lysine 220 is subject to N6-(retinylidene)lysine. Over 228–250 (LRSHGVLDGAAETTGTGATPADD) the chain is Cytoplasmic.

It belongs to the archaeal/bacterial/fungal opsin family. In terms of assembly, homotrimer.

The protein resides in the cell membrane. Light-driven proton pump. The protein is Cruxrhodopsin-1 (cop1) of Haloarcula argentinensis.